Reading from the N-terminus, the 376-residue chain is Multiphosphoryl transfer protein (376 aa).

The PTS EIIA type-2 domain occupies 2-142 (FQLSVQDIHP…EELRALLMGE (141 aa)). H62 acts as the Tele-phosphohistidine intermediate; for EIIA activity in catalysis. A Phosphohistidine; by HPr modification is found at H62. The segment at 156-284 (TLDVIASSLV…LTSDDALTDD (129 aa)) is m domain. The 91-residue stretch at 285-375 (VLSAEFVVRN…DAIAAGLGEG (91 aa)) folds into the HPr domain. The active-site Pros-phosphohistidine intermediate; for HPr activity is the H299. Phosphohistidine; by EI is present on H299.

The protein localises to the cytoplasm. Its function is as follows. The phosphoenolpyruvate-dependent sugar phosphotransferase system (sugar PTS), a major carbohydrate active transport system, catalyzes the phosphorylation of incoming sugar substrates concomitantly with their translocation across the cell membrane. The enzyme II FruAB PTS system is involved in fructose transport. The protein is Multiphosphoryl transfer protein (fruB) of Salmonella typhimurium (strain LT2 / SGSC1412 / ATCC 700720).